A 337-amino-acid polypeptide reads, in one-letter code: Retrovirus-related Pol polyprotein from type-1 retrotransposable element R1 (337 aa).

Residues 1-118 (GCPQGSISGP…KSARYLGVCM (118 aa)) form the Reverse transcriptase domain. The interval 253–337 (KRARSCKLMK…ACPCGAPRED (85 aa)) is nucleic acid-binding endonuclease.

It catalyses the reaction DNA(n) + a 2'-deoxyribonucleoside 5'-triphosphate = DNA(n+1) + diphosphate. The chain is Retrovirus-related Pol polyprotein from type-1 retrotransposable element R1 from Nasonia vitripennis (Parasitic wasp).